A 1004-amino-acid polypeptide reads, in one-letter code: Sal-like protein 2 (1004 aa).

Disordered stretches follow at residues methionine 1–proline 33, alanine 51–serine 122, glycine 137–leucine 177, proline 220–lysine 270, and proline 285–glycine 307. The segment at glutamine 34–cysteine 56 adopts a C2H2-type 1; atypical zinc-finger fold. The segment covering asparagine 71–proline 81 has biased composition (low complexity). The span at proline 83–asparagine 98 shows a compositional bias: basic and acidic residues. Over residues proline 99–proline 110 the composition is skewed to low complexity. Residues proline 151–glycine 171 show a composition bias toward pro residues. Serine 243 carries the phosphoserine modification. C2H2-type zinc fingers lie at residues histidine 372–histidine 394, tyrosine 400–histidine 422, asparagine 629–histidine 651, phenylalanine 657–histidine 679, and asparagine 689–histidine 711. The interval leucine 712–cysteine 910 is disordered. Residues glutamine 731 to glycine 742 are compositionally biased toward polar residues. Residues proline 756–serine 779 are compositionally biased toward acidic residues. Phosphoserine is present on residues serine 794, serine 799, and serine 803. Acidic residues predominate over residues glutamate 800 to valine 809. Positions alanine 810–valine 819 are enriched in low complexity. Residues lysine 820–proline 829 are compositionally biased toward basic and acidic residues. The span at threonine 832–aspartate 841 shows a compositional bias: pro residues. Positions alanine 896–cysteine 910 are enriched in basic and acidic residues. Lysine 908 is covalently cross-linked (Glycyl lysine isopeptide (Lys-Gly) (interchain with G-Cter in ubiquitin)). 2 consecutive C2H2-type zinc fingers follow at residues lysine 908 to histidine 930 and phenylalanine 937 to histidine 961.

Belongs to the sal C2H2-type zinc-finger protein family. In terms of tissue distribution, expressed throughout embryonic development. In adult predominantly in brain.

It is found in the nucleus. Functionally, probable transcription factor that plays a role in eye development before, during, and after optic fissure closure. The sequence is that of Sal-like protein 2 (Sall2) from Mus musculus (Mouse).